We begin with the raw amino-acid sequence, 101 residues long: NADH-quinone oxidoreductase subunit K (101 aa).

The next 3 membrane-spanning stretches (helical) occupy residues 4–24, 30–50, and 61–81; these read LAHF…GIFL, IVLL…FVAF, and VFVF…LAIL.

This sequence belongs to the complex I subunit 4L family. In terms of assembly, NDH-1 is composed of 14 different subunits. Subunits NuoA, H, J, K, L, M, N constitute the membrane sector of the complex.

The protein localises to the cell inner membrane. The enzyme catalyses a quinone + NADH + 5 H(+)(in) = a quinol + NAD(+) + 4 H(+)(out). Its function is as follows. NDH-1 shuttles electrons from NADH, via FMN and iron-sulfur (Fe-S) centers, to quinones in the respiratory chain. The immediate electron acceptor for the enzyme in this species is believed to be ubiquinone. Couples the redox reaction to proton translocation (for every two electrons transferred, four hydrogen ions are translocated across the cytoplasmic membrane), and thus conserves the redox energy in a proton gradient. This chain is NADH-quinone oxidoreductase subunit K, found in Cupriavidus taiwanensis (strain DSM 17343 / BCRC 17206 / CCUG 44338 / CIP 107171 / LMG 19424 / R1) (Ralstonia taiwanensis (strain LMG 19424)).